Consider the following 142-residue polypeptide: Large ribosomal subunit protein uL13 (142 aa).

The protein belongs to the universal ribosomal protein uL13 family. In terms of assembly, part of the 50S ribosomal subunit.

Functionally, this protein is one of the early assembly proteins of the 50S ribosomal subunit, although it is not seen to bind rRNA by itself. It is important during the early stages of 50S assembly. The sequence is that of Large ribosomal subunit protein uL13 from Vibrio cholerae serotype O1 (strain M66-2).